A 61-amino-acid chain; its full sequence is Short neurotoxin 2 (61 aa).

Cystine bridges form between Cys-3-Cys-23, Cys-17-Cys-40, Cys-42-Cys-53, and Cys-54-Cys-59.

This sequence belongs to the three-finger toxin family. Short-chain subfamily. Type I alpha-neurotoxin sub-subfamily. As to expression, expressed by the venom gland.

The protein resides in the secreted. Functionally, binds to muscle nicotinic acetylcholine receptor (nAChR) and inhibit acetylcholine from binding to the receptor, thereby impairing neuromuscular transmission. This Naja nivea (Cape cobra) protein is Short neurotoxin 2.